The sequence spans 620 residues: DNA mismatch repair protein MutL (620 aa).

Positions 353–375 are disordered; sequence SRANGANDFTGRPFSGTERPRGG.

It belongs to the DNA mismatch repair MutL/HexB family.

In terms of biological role, this protein is involved in the repair of mismatches in DNA. It is required for dam-dependent methyl-directed DNA mismatch repair. May act as a 'molecular matchmaker', a protein that promotes the formation of a stable complex between two or more DNA-binding proteins in an ATP-dependent manner without itself being part of a final effector complex. This chain is DNA mismatch repair protein MutL, found in Chelativorans sp. (strain BNC1).